The primary structure comprises 429 residues: Adenylosuccinate synthetase (429 aa).

GTP-binding positions include 12 to 18 and 40 to 42; these read GDEGKGK and GHT. The active-site Proton acceptor is Asp13. Mg(2+) contacts are provided by Asp13 and Gly40. IMP contacts are provided by residues 13–16, 38–41, Thr128, Arg142, Gln223, Thr238, and Arg302; these read DEGK and NAGH. Catalysis depends on His41, which acts as the Proton donor. 298–304 is a substrate binding site; sequence VNTGRKR. GTP is bound by residues Arg304, 330 to 332, and 412 to 414; these read KLD and GVG.

The protein belongs to the adenylosuccinate synthetase family. In terms of assembly, homodimer. Requires Mg(2+) as cofactor.

The protein resides in the cytoplasm. It carries out the reaction IMP + L-aspartate + GTP = N(6)-(1,2-dicarboxyethyl)-AMP + GDP + phosphate + 2 H(+). It participates in purine metabolism; AMP biosynthesis via de novo pathway; AMP from IMP: step 1/2. Functionally, plays an important role in the de novo pathway of purine nucleotide biosynthesis. Catalyzes the first committed step in the biosynthesis of AMP from IMP. The polypeptide is Adenylosuccinate synthetase (Corynebacterium efficiens (strain DSM 44549 / YS-314 / AJ 12310 / JCM 11189 / NBRC 100395)).